Here is a 465-residue protein sequence, read N- to C-terminus: Cysteine--tRNA ligase (465 aa).

A Zn(2+)-binding site is contributed by Cys-29. Residues 31-41 (PTVYNYIHIGN) carry the 'HIGH' region motif. Zn(2+) contacts are provided by Cys-209, His-234, and Glu-238. A 'KMSKS' region motif is present at residues 266–270 (KMSKS). Lys-269 lines the ATP pocket. At Ser-270 the chain carries Phosphoserine.

This sequence belongs to the class-I aminoacyl-tRNA synthetase family. As to quaternary structure, monomer. Zn(2+) is required as a cofactor.

The protein resides in the cytoplasm. It carries out the reaction tRNA(Cys) + L-cysteine + ATP = L-cysteinyl-tRNA(Cys) + AMP + diphosphate. In Bacillus cytotoxicus (strain DSM 22905 / CIP 110041 / 391-98 / NVH 391-98), this protein is Cysteine--tRNA ligase.